Here is a 370-residue protein sequence, read N- to C-terminus: Cytochrome b (370 aa).

4 helical membrane passes run Phe25 to Val45, Trp69 to Ile90, Trp105 to Leu125, and Phe170 to Leu190. Residues His75 and His89 each coordinate heme b. Residues His174 and His188 each coordinate heme b. Residue His193 coordinates a ubiquinone. Helical transmembrane passes span Tyr218 to Phe238, Leu280 to His300, Phe312 to Thr332, and Phe339 to Pro358.

This sequence belongs to the cytochrome b family. As to quaternary structure, the cytochrome bc1 complex contains 3 respiratory subunits (MT-CYB, CYC1 and UQCRFS1), 2 core proteins (UQCRC1 and UQCRC2) and probably 6 low-molecular weight proteins. Requires heme b as cofactor.

Its subcellular location is the mitochondrion inner membrane. Functionally, component of the ubiquinol-cytochrome c reductase complex (complex III or cytochrome b-c1 complex) that is part of the mitochondrial respiratory chain. The b-c1 complex mediates electron transfer from ubiquinol to cytochrome c. Contributes to the generation of a proton gradient across the mitochondrial membrane that is then used for ATP synthesis. The sequence is that of Cytochrome b (MT-CYB) from Chilabothrus exsul (Abaco Island boa).